Reading from the N-terminus, the 218-residue chain is Epoxyqueuosine reductase QueH (218 aa).

Positions 22, 23, 101, and 104 each coordinate [4Fe-4S] cluster. Residues cysteine 184 and cysteine 186 are joined by a disulfide bond.

The protein belongs to the QueH family.

The catalysed reaction is epoxyqueuosine(34) in tRNA + AH2 = queuosine(34) in tRNA + A + H2O. The protein operates within tRNA modification; tRNA-queuosine biosynthesis. Functionally, catalyzes the conversion of epoxyqueuosine (oQ) to queuosine (Q), which is a hypermodified base found in the wobble positions of tRNA(Asp), tRNA(Asn), tRNA(His) and tRNA(Tyr). The sequence is that of Epoxyqueuosine reductase QueH from Acinetobacter baylyi (strain ATCC 33305 / BD413 / ADP1).